The sequence spans 54 residues: Protein hunchback (54 aa).

3 C2H2-type zinc fingers span residues 1-3 (RKH), 9-31 (FQCD…RKFH), and 37-54 (YRCA…SFKL).

This sequence belongs to the hunchback C2H2-type zinc-finger protein family.

The protein resides in the nucleus. Its function is as follows. Gap class segmentation protein that controls development of head structures. In Calliphora vicina (Blue blowfly), this protein is Protein hunchback (hb).